The chain runs to 528 residues: Low affinity inorganic phosphate transporter 4 (528 aa).

At 1 to 18 (MGLEVLEALDSARTQWYH) the chain is on the cytoplasmic side. The helical transmembrane segment at 19–39 (VTAIVIAGMGFFTDAYDLFCI) threads the bilayer. The Extracellular segment spans residues 40-68 (STVSKLLGRLYYFDPSTNKPGKLPPSVNN). The helical transmembrane segment at 69-89 (VVTGVALVGTLSGQLVFGWLG) threads the bilayer. The Cytoplasmic segment spans residues 90–96 (DKLGRKK). A helical membrane pass occupies residues 97-117 (VYGVTLIIMVACAICSGLSFG). Residues 118–122 (SSAKS) lie on the Extracellular side of the membrane. A helical transmembrane segment spans residues 123–143 (VMITLCFFRFWLGFGIGGDYP). Topologically, residues 144 to 158 (LSATIMSEYANKRTR) are cytoplasmic. A helical transmembrane segment spans residues 159–179 (GAFIAAVFAMQGVGIIFAGLV). The Extracellular portion of the chain corresponds to 180–208 (SMVFSGIFKAYYQAPRFNEDPILSTQPEG). Residues 209 to 229 (DLLWRLILMIGAVPAAMTYYW) traverse the membrane as a helical segment. The Cytoplasmic portion of the chain corresponds to 230–292 (RMKMPETGRY…SEFFNRHGRH (63 aa)). Residues 293–313 (LIGTMSCWFLLDIAFYSQNLT) form a helical membrane-spanning segment. Topologically, residues 314 to 341 (QKDIYPAMGLIRQDKEMNAIDEVFQTSR) are extracellular. Residues 342–362 (AMFVVALFGTFPGYWFTVFFI) form a helical membrane-spanning segment. Over 363–371 (EKLGRFKIQ) the chain is Cytoplasmic. Residues 372–392 (LVGFFMMSFFMFVIGVKYEYL) form a helical membrane-spanning segment. Topologically, residues 393-401 (KDENKNLFA) are extracellular. The chain crosses the membrane as a helical span at residues 402–422 (LLYGLTFFFANFGPNSTTFVL). The Cytoplasmic segment spans residues 423–433 (PAELFPTRVRS). A helical transmembrane segment spans residues 434-454 (TCHAFSAASGKAGAMVGAFGI). The Extracellular segment spans residues 455-468 (QYYTLDGTPRKIRR). The helical transmembrane segment at 469-489 (AMMILAFTNLIGFFCTFLVTE) threads the bilayer. Over 490–528 (TKGRSLEEISGEDGRESELTATPNDRAPGIRQDSRTEKM) the chain is Cytoplasmic. Residues 497 to 507 (EISGEDGRESE) show a composition bias toward basic and acidic residues. Positions 497–528 (EISGEDGRESELTATPNDRAPGIRQDSRTEKM) are disordered.

The protein belongs to the major facilitator superfamily. Phosphate:H(+) symporter (TC 2.A.1.9) family. As to expression, mostly expressed in mycorrhizal roots. Also observed in root tips of non-mycorrhizal roots, in a phosphate (Pi) depended-manner, highest expression levels being observed in low Pi conditions.

Its subcellular location is the cell membrane. The catalysed reaction is phosphate(in) + H(+)(in) = phosphate(out) + H(+)(out). Functionally, low-affinity transporter for external inorganic phosphate (Pi) probably involved in the acquisition of phosphate released by arbuscular mycorrhizal (AM) fungi (e.g. Gigaspora gigantea, Glomus versiforme and G.intraradices) during AM symbiosis; required for propper mycorrhizal arbuscule morphology. Acts as a Pi-sensing machinery at the root tip level, independently of AM fungi, involved in the regulation of early root branching and lateral roots formation. The sequence is that of Low affinity inorganic phosphate transporter 4 from Medicago truncatula (Barrel medic).